Reading from the N-terminus, the 512-residue chain is SNF1-related protein kinase catalytic subunit alpha KIN11 (512 aa).

Residues 20–272 (YKLGKTLGIG…IPEIRQHRWF (253 aa)) form the Protein kinase domain. Residues 26 to 34 (LGIGSFGKV) and Lys-49 contribute to the ATP site. The active-site Proton acceptor is the Asp-143. Ser-165 is modified (phosphoserine). Thr-176 carries the phosphothreonine; by GRIK1 or GRIK2 modification. An auto-inhibitory domain (AID) region spans residues 291-391 (AKKINEEIVQ…GARSQVPVDR (101 aa)). The UBA domain maps to 293–333 (KINEEIVQEVVNMGFDRNQVLESLRNRTQNDATVTYYLLLD). The regulatory domain (RD) stretch occupies residues 295-512 (NEEIVQEVVN…AAFLTELRVI (218 aa)). Residues 392 to 512 (KWALGLQSHA…AAFLTELRVI (121 aa)) are PPI. An interaction with PAD1 and SKP1 region spans residues 399–512 (SHAHPREIMN…AAFLTELRVI (114 aa)). The KA1 domain maps to 463-511 (AMTSPTVIKFELQLYKAREEKYLLDIQRVNGPQFLFLDLCAAFLTELRV).

It belongs to the protein kinase superfamily. CAMK Ser/Thr protein kinase family. SNF1 subfamily. As to quaternary structure, subunit of a probable heterotrimeric complex consisting of an alpha catalytic (KIN10 or KIN11) subunit, and a beta (KINB) and a gamma (KING or SNF4) non-catalytic regulatory subunits. Interacts with KINB2, KINB3, SNF4 and probably with KINB1 and KING1. Interacts with SKP1/ASK1, PAD1 and the N-terminus of PRL1. Potential subunit of a SCF ubiquitin ligase complex consisting of a SNF1-related protein kinase, SKP1 and CUL1. The association of the SCF complex with the proteasome may be mediated by PAD1 and seems to be inhibited by the interaction with PRL1. Interacts with DSP4. Interacts with the begomovirus AL2 protein and the curtovirus L2 protein. Interacts with ATAF1. Interacts with CIPK14. Interacts with FLZ proteins through their FLZ-type zinc finger domains. Interacts with GEBP/STKR1. Interacts with REM4.1 and REM4.2. Interacts with ADK2. Interacts with IDD8. Interacts with FLZ3, FLZ9, TCP3, TCP13, HB21/ZHD3 and HB23/ZHD10. Interacts with WRI1. Interacts with IPK2b. Interacts with FLZ6 and FLZ10. Sumoylated by SIZ1. Post-translationally, phosphorylated at Thr-176 under submergence. Autophosphorylated. Phosphorylated at Thr-176 by GRIK1/SNAK2 and GRIK2/SNAK1. Expressed in roots, shoots, flower buds, flowers, siliques and leaves. Restrictly expressed to the base of the leaf, the vascular tissue, and the hydathodes.

Its subcellular location is the plastid. It is found in the chloroplast. The protein localises to the cytoplasm. The protein resides in the endoplasmic reticulum. The catalysed reaction is L-seryl-[protein] + ATP = O-phospho-L-seryl-[protein] + ADP + H(+). It carries out the reaction L-threonyl-[protein] + ATP = O-phospho-L-threonyl-[protein] + ADP + H(+). Inactivated by the begomovirus AL2 protein or the curtovirus L2 protein. Activated by phosphorylation at Thr-176 by GRIK1/SNAK2 and GRIK2/SNAK1. Inhibited by trehalose-6-phosphate. Catalytic subunit of the probable trimeric SNF1-related protein kinase (SnRK) complex, a central regulator of cellular energy homeostasis, which, in response to seemingly unrelated darkness, sugar and stress conditions, activates energy-producing pathways and inhibits energy-consuming processes. May play a role in a signal transduction cascade regulating gene expression and carbohydrate metabolism in higher plants. The SnRK complex may also be involved in the regulation of fatty acid synthesis by phosphorylation of acetyl-CoA carboxylase and in assimilation of nitrogen by phosphorylating nitrate reductase. In vitro, KIN11 exhibits kinase activity on sucrose phosphate synthase and the kinase activity is inhibited by PRL1. May be a subunit of a SCF ubiquitin ligase complex and thus be involved in proteasomal ubiquitination. Involved in innate antiviral defenses. Phosphorylates REM4.1 in vitro. Phosphorylates ADK2 in vitro. This is SNF1-related protein kinase catalytic subunit alpha KIN11 from Arabidopsis thaliana (Mouse-ear cress).